A 95-amino-acid polypeptide reads, in one-letter code: Co-chaperonin GroES (95 aa).

This sequence belongs to the GroES chaperonin family. In terms of assembly, heptamer of 7 subunits arranged in a ring. Interacts with the chaperonin GroEL.

The protein localises to the cytoplasm. Together with the chaperonin GroEL, plays an essential role in assisting protein folding. The GroEL-GroES system forms a nano-cage that allows encapsulation of the non-native substrate proteins and provides a physical environment optimized to promote and accelerate protein folding. GroES binds to the apical surface of the GroEL ring, thereby capping the opening of the GroEL channel. The polypeptide is Co-chaperonin GroES (Streptococcus salivarius).